The following is a 415-amino-acid chain: uncharacterized protein (415 aa).

4 residues coordinate [4Fe-4S] cluster: Cys66, Cys72, Cys75, and Cys149. Residues Gln249, Phe276, Glu296, and Asp344 each coordinate S-adenosyl-L-methionine. The Nucleophile role is filled by Cys370.

It belongs to the class I-like SAM-binding methyltransferase superfamily. RNA M5U methyltransferase family.

This is an uncharacterized protein from Brucella suis biovar 1 (strain 1330).